The chain runs to 327 residues: Phenylalanine--tRNA ligase alpha subunit (327 aa).

Mg(2+) is bound at residue Glu252.

This sequence belongs to the class-II aminoacyl-tRNA synthetase family. Phe-tRNA synthetase alpha subunit type 1 subfamily. As to quaternary structure, tetramer of two alpha and two beta subunits. It depends on Mg(2+) as a cofactor.

The protein localises to the cytoplasm. The enzyme catalyses tRNA(Phe) + L-phenylalanine + ATP = L-phenylalanyl-tRNA(Phe) + AMP + diphosphate + H(+). This chain is Phenylalanine--tRNA ligase alpha subunit, found in Yersinia pestis bv. Antiqua (strain Angola).